Here is a 65-residue protein sequence, read N- to C-terminus: Large ribosomal subunit protein eL24 (65 aa).

Cys-6, Cys-9, Cys-32, and Cys-36 together coordinate Zn(2+). The C4-type zinc-finger motif lies at Cys-6–Cys-36.

Belongs to the eukaryotic ribosomal protein eL24 family. In terms of assembly, part of the 50S ribosomal subunit. Forms a cluster with proteins L3 and L14. Requires Zn(2+) as cofactor.

Its function is as follows. Binds to the 23S rRNA. The polypeptide is Large ribosomal subunit protein eL24 (Pyrobaculum arsenaticum (strain DSM 13514 / JCM 11321 / PZ6)).